Consider the following 350-residue polypeptide: Galactokinase (350 aa).

Position 14-17 (14-17 (EHTD)) interacts with substrate. Residues S46 and 96–102 (GAGLSSS) contribute to the ATP site. Mg(2+)-binding residues include S102 and E134. D146 functions as the Proton acceptor in the catalytic mechanism. Residue Y196 coordinates substrate.

This sequence belongs to the GHMP kinase family. GalK subfamily.

Its subcellular location is the cytoplasm. It carries out the reaction alpha-D-galactose + ATP = alpha-D-galactose 1-phosphate + ADP + H(+). It participates in carbohydrate metabolism; galactose metabolism. Functionally, catalyzes the transfer of the gamma-phosphate of ATP to D-galactose to form alpha-D-galactose-1-phosphate (Gal-1-P). This Thermotoga maritima (strain ATCC 43589 / DSM 3109 / JCM 10099 / NBRC 100826 / MSB8) protein is Galactokinase.